Consider the following 506-residue polypeptide: ATP synthase subunit alpha (506 aa).

170–177 (GDRQTGKT) contributes to the ATP binding site.

The protein belongs to the ATPase alpha/beta chains family. As to quaternary structure, F-type ATPases have 2 components, CF(1) - the catalytic core - and CF(0) - the membrane proton channel. CF(1) has five subunits: alpha(3), beta(3), gamma(1), delta(1), epsilon(1). CF(0) has four main subunits: a(1), b(1), b'(1) and c(9-12).

Its subcellular location is the cellular thylakoid membrane. It catalyses the reaction ATP + H2O + 4 H(+)(in) = ADP + phosphate + 5 H(+)(out). In terms of biological role, produces ATP from ADP in the presence of a proton gradient across the membrane. The alpha chain is a regulatory subunit. The protein is ATP synthase subunit alpha of Parasynechococcus marenigrum (strain WH8102).